The sequence spans 461 residues: Cyclic 2,3-diphosphoglycerate synthetase (461 aa).

It belongs to the cyclic 2,3-diphosphoglycerate synthetase family.

The protein resides in the cytoplasm. The catalysed reaction is (2R)-2,3-bisphosphoglycerate + ATP + H(+) = cyclic (2R)-2,3-bisphosphoglycerate + ADP + phosphate. Its function is as follows. Catalyzes the formation of cyclic 2,3-diphosphoglycerate (cDPG) by formation of an intramolecular phosphoanhydride bond at the expense of ATP. This chain is Cyclic 2,3-diphosphoglycerate synthetase, found in Methanosphaera stadtmanae (strain ATCC 43021 / DSM 3091 / JCM 11832 / MCB-3).